A 301-amino-acid chain; its full sequence is Probable alpha-L-glutamate ligase (301 aa).

The ATP-grasp domain maps to 104–287 (HQLLAAQGID…VAIKIVHHVE (184 aa)). ATP contacts are provided by residues Lys-141, 178–179 (EF), Asp-187, and 211–213 (RSN). Mg(2+) contacts are provided by Asp-248, Glu-260, and Asn-262. Positions 248, 260, and 262 each coordinate Mn(2+).

It belongs to the RimK family. Requires Mg(2+) as cofactor. The cofactor is Mn(2+).

The sequence is that of Probable alpha-L-glutamate ligase from Xylella fastidiosa (strain M12).